We begin with the raw amino-acid sequence, 154 residues long: 6,7-dimethyl-8-ribityllumazine synthase (154 aa).

Residues Phe-22, 56–58 (AFE), and 80–82 (AVI) contribute to the 5-amino-6-(D-ribitylamino)uracil site. (2S)-2-hydroxy-3-oxobutyl phosphate is bound at residue 85 to 86 (AT). The active-site Proton donor is the His-88. 5-amino-6-(D-ribitylamino)uracil is bound at residue Phe-113. (2S)-2-hydroxy-3-oxobutyl phosphate is bound at residue Arg-127.

Belongs to the DMRL synthase family.

The catalysed reaction is (2S)-2-hydroxy-3-oxobutyl phosphate + 5-amino-6-(D-ribitylamino)uracil = 6,7-dimethyl-8-(1-D-ribityl)lumazine + phosphate + 2 H2O + H(+). The protein operates within cofactor biosynthesis; riboflavin biosynthesis; riboflavin from 2-hydroxy-3-oxobutyl phosphate and 5-amino-6-(D-ribitylamino)uracil: step 1/2. Its function is as follows. Catalyzes the formation of 6,7-dimethyl-8-ribityllumazine by condensation of 5-amino-6-(D-ribitylamino)uracil with 3,4-dihydroxy-2-butanone 4-phosphate. This is the penultimate step in the biosynthesis of riboflavin. The protein is 6,7-dimethyl-8-ribityllumazine synthase of Clostridium botulinum (strain 657 / Type Ba4).